A 215-amino-acid polypeptide reads, in one-letter code: Adenylate kinase (215 aa).

Residue 10 to 15 coordinates ATP; it reads GAGKGT. Residues 30–59 are NMP; that stretch reads STGDMFRKAIKDETDLGKEAKSYMDRGELV. Residues T31, R36, 57-59, 85-88, and Q92 contribute to the AMP site; these read ELV and GFPR. Residues 126-163 are LID; it reads GRRICEKCGTTYHLVFNPPKVDGICDIDGGKLYQREDD. ATP is bound at residue R127. Zn(2+) contacts are provided by C130 and C133. 136–137 provides a ligand contact to ATP; that stretch reads TY. C150 and D153 together coordinate Zn(2+). AMP is bound by residues R160 and R171. K199 provides a ligand contact to ATP.

The protein belongs to the adenylate kinase family. As to quaternary structure, monomer.

It localises to the cytoplasm. The catalysed reaction is AMP + ATP = 2 ADP. It participates in purine metabolism; AMP biosynthesis via salvage pathway; AMP from ADP: step 1/1. Its function is as follows. Catalyzes the reversible transfer of the terminal phosphate group between ATP and AMP. Plays an important role in cellular energy homeostasis and in adenine nucleotide metabolism. The sequence is that of Adenylate kinase from Staphylococcus epidermidis (strain ATCC 35984 / DSM 28319 / BCRC 17069 / CCUG 31568 / BM 3577 / RP62A).